The following is a 178-amino-acid chain: Large ribosomal subunit protein uL6 (178 aa).

Belongs to the universal ribosomal protein uL6 family. As to quaternary structure, part of the 50S ribosomal subunit.

In terms of biological role, this protein binds to the 23S rRNA, and is important in its secondary structure. It is located near the subunit interface in the base of the L7/L12 stalk, and near the tRNA binding site of the peptidyltransferase center. The polypeptide is Large ribosomal subunit protein uL6 (Streptococcus sanguinis (strain SK36)).